Consider the following 423-residue polypeptide: Serine--tRNA ligase (423 aa).

Residue 231-233 (TAE) coordinates L-serine. 262–264 (RSE) provides a ligand contact to ATP. Position 285 (E285) interacts with L-serine. 349 to 352 (EIGS) provides a ligand contact to ATP. S385 serves as a coordination point for L-serine.

This sequence belongs to the class-II aminoacyl-tRNA synthetase family. Type-1 seryl-tRNA synthetase subfamily. In terms of assembly, homodimer. The tRNA molecule binds across the dimer.

It localises to the cytoplasm. It carries out the reaction tRNA(Ser) + L-serine + ATP = L-seryl-tRNA(Ser) + AMP + diphosphate + H(+). The enzyme catalyses tRNA(Sec) + L-serine + ATP = L-seryl-tRNA(Sec) + AMP + diphosphate + H(+). Its pathway is aminoacyl-tRNA biosynthesis; selenocysteinyl-tRNA(Sec) biosynthesis; L-seryl-tRNA(Sec) from L-serine and tRNA(Sec): step 1/1. Functionally, catalyzes the attachment of serine to tRNA(Ser). Is also able to aminoacylate tRNA(Sec) with serine, to form the misacylated tRNA L-seryl-tRNA(Sec), which will be further converted into selenocysteinyl-tRNA(Sec). The polypeptide is Serine--tRNA ligase (Acholeplasma laidlawii (strain PG-8A)).